A 254-amino-acid polypeptide reads, in one-letter code: 3-deoxy-manno-octulosonate cytidylyltransferase (254 aa).

This sequence belongs to the KdsB family.

The protein resides in the cytoplasm. It carries out the reaction 3-deoxy-alpha-D-manno-oct-2-ulosonate + CTP = CMP-3-deoxy-beta-D-manno-octulosonate + diphosphate. It participates in nucleotide-sugar biosynthesis; CMP-3-deoxy-D-manno-octulosonate biosynthesis; CMP-3-deoxy-D-manno-octulosonate from 3-deoxy-D-manno-octulosonate and CTP: step 1/1. Its function is as follows. Activates KDO (a required 8-carbon sugar) for incorporation into bacterial lipopolysaccharide in Gram-negative bacteria. The polypeptide is 3-deoxy-manno-octulosonate cytidylyltransferase (Lawsonia intracellularis (strain PHE/MN1-00)).